Here is a 34-residue protein sequence, read N- to C-terminus: Beta-theraphotoxin-Pmu1a (34 aa).

Intrachain disulfides connect cysteine 3/cysteine 18, cysteine 10/cysteine 23, and cysteine 17/cysteine 30. Leucine 34 is modified (leucine amide).

It belongs to the neurotoxin 10 (Hwtx-1) family. 34 (Jztx-26) subfamily. As to expression, expressed by the venom gland.

The protein resides in the secreted. Its function is as follows. Spider venom neurotoxin that blocks voltage-gated sodium channels Nav1.3/SCN3A and Nav1.8/SCN10A in human (IC(50)=2 uM and IC(50)=4 uM, respectively) and rat (IC(50)=2 uM and IC(50)=2.5 uM, respectively). In Pterinochilus murinus (Mombasa golden starburst baboon spider), this protein is Beta-theraphotoxin-Pmu1a.